Reading from the N-terminus, the 438-residue chain is sn-glycerol-3-phosphate-binding periplasmic protein UgpB (438 aa).

A signal peptide spans 1–23; it reads MKPLHYTASALALGLALMGNAQA. Positions 65, 89, 144, 270, 307, 346, and 397 each coordinate sn-glycerol 3-phosphate.

Belongs to the bacterial solute-binding protein 1 family. In terms of assembly, the complex is composed of two ATP-binding proteins (UgpC), two transmembrane proteins (UgpA and UgpE) and a solute-binding protein (UgpB).

The protein localises to the periplasm. Its function is as follows. Part of the ABC transporter complex UgpBAEC involved in sn-glycerol-3-phosphate (G3P) import. Binds G3P. In Shigella flexneri, this protein is sn-glycerol-3-phosphate-binding periplasmic protein UgpB (ugpB).